A 632-amino-acid polypeptide reads, in one-letter code: tRNA uridine 5-carboxymethylaminomethyl modification enzyme MnmG (632 aa).

Residues 15–20, I127, and S182 contribute to the FAD site; that span reads GAGHAG. Position 276-290 (276-290) interacts with NAD(+); sequence GPRYCPSIEDKIVRF. Q373 lines the FAD pocket.

It belongs to the MnmG family. As to quaternary structure, homodimer. Heterotetramer of two MnmE and two MnmG subunits. It depends on FAD as a cofactor.

The protein localises to the cytoplasm. Its function is as follows. NAD-binding protein involved in the addition of a carboxymethylaminomethyl (cmnm) group at the wobble position (U34) of certain tRNAs, forming tRNA-cmnm(5)s(2)U34. The polypeptide is tRNA uridine 5-carboxymethylaminomethyl modification enzyme MnmG (Streptococcus pyogenes serotype M12 (strain MGAS2096)).